The following is a 210-amino-acid chain: Prolactin (210 aa).

The N-terminal stretch at 1–23 (MAEGSRLYFAVTVLMCAFVSING) is a signal peptide. Cystine bridges form between cysteine 69–cysteine 183 and cysteine 200–cysteine 210.

Belongs to the somatotropin/prolactin family. In terms of tissue distribution, pituitary gland.

It is found in the secreted. This chain is Prolactin (prl), found in Hypophthalmichthys nobilis (Bighead carp).